A 674-amino-acid chain; its full sequence is UvrABC system protein C (674 aa).

A GIY-YIG domain is found at 16-95; the sequence is TNPGVYRFRD…IKEFKPRFNV (80 aa). Positions 207–242 constitute a UVR domain; that stretch reads KRFTNKLEKQMAAAVARLDYEQAARIRDDITALRKV.

Belongs to the UvrC family. Interacts with UvrB in an incision complex.

The protein resides in the cytoplasm. Its function is as follows. The UvrABC repair system catalyzes the recognition and processing of DNA lesions. UvrC both incises the 5' and 3' sides of the lesion. The N-terminal half is responsible for the 3' incision and the C-terminal half is responsible for the 5' incision. This chain is UvrABC system protein C, found in Pseudarthrobacter chlorophenolicus (strain ATCC 700700 / DSM 12829 / CIP 107037 / JCM 12360 / KCTC 9906 / NCIMB 13794 / A6) (Arthrobacter chlorophenolicus).